The sequence spans 929 residues: Dual specificity protein phosphatase PHS1 (929 aa).

Disordered stretches follow at residues 1–27 (MAEP…LVHD) and 545–618 (PESP…SLSS). 2 stretches are compositionally biased toward basic and acidic residues: residues 552–580 (HGHE…ESDM) and 591–606 (ENKE…ESWH). The Tyrosine-protein phosphatase domain maps to 703–848 (KPSMIQENLF…LINLDKKCHG (146 aa)). The Phosphocysteine intermediate role is filled by C792. 792–798 (CFEGRSR) provides a ligand contact to substrate. A Nuclear export signal motif is present at residues 903 to 911 (QKALEALKL).

In terms of assembly, interacts with MPK18. In terms of tissue distribution, expressed in roots, leaves and flowers.

The protein resides in the cytoplasm. It catalyses the reaction O-phospho-L-seryl-[protein] + H2O = L-seryl-[protein] + phosphate. It carries out the reaction O-phospho-L-threonyl-[protein] + H2O = L-threonyl-[protein] + phosphate. The catalysed reaction is O-phospho-L-tyrosyl-[protein] + H2O = L-tyrosyl-[protein] + phosphate. Probable dual specificity phosphatase that binds and dephosphorylates MPK18, modulating the organization and dynamics of cortical microtubules. Acts as a negative regulator of abscisic acid (ABA) signaling during seed germination and light-induced stomata aperture. The chain is Dual specificity protein phosphatase PHS1 (PHS1) from Arabidopsis thaliana (Mouse-ear cress).